We begin with the raw amino-acid sequence, 412 residues long: Protein MT3510 (412 aa).

Position 227 is an N6-(pyridoxal phosphate)lysine (lysine 227).

It belongs to the DegT/DnrJ/EryC1 family.

The chain is Protein MT3510 from Mycobacterium tuberculosis (strain CDC 1551 / Oshkosh).